The sequence spans 89 residues: Small ribosomal subunit protein bS16 (89 aa).

It belongs to the bacterial ribosomal protein bS16 family.

The chain is Small ribosomal subunit protein bS16 from Psychrobacter arcticus (strain DSM 17307 / VKM B-2377 / 273-4).